The chain runs to 20 residues: Mu-conotoxin SIIIB (20 aa).

Glutamine 1 bears the Pyrrolidone carboxylic acid mark. Disulfide bonds link cysteine 3/cysteine 13, cysteine 4/cysteine 19, and cysteine 8/cysteine 20. Cysteine 20 is modified (cysteine amide).

As to expression, expressed by the venom duct.

The protein resides in the secreted. Functionally, mu-conotoxins block voltage-gated sodium channels (VGSC). Potently displaces (125)I-TIIIA from native rat brain Nav1.2/SCN2A (IC(50) is 5 nM) and muscle Nav1.4/SCN4A (IC(50) is 3 nM) VGSCs. Potently and irreversibly inhibits current through Xenopus oocyte-expressed Nav1.2/SCN2A and Nav1.4/SCN4A. The polypeptide is Mu-conotoxin SIIIB (Conus striatus (Striated cone)).